A 516-amino-acid chain; its full sequence is BAR/IMD domain-containing adapter protein 2-like 2 (516 aa).

One can recognise an IMD domain in the interval 1–227; sequence MSGVNSDLLH…PTPLDQEAQL (227 aa). The disordered stretch occupies residues 200–273; sequence ADGWKEKVSE…SSSVGESLGL (74 aa). Residues 201–212 show a composition bias toward basic and acidic residues; sequence DGWKEKVSESRS. Polar residues predominate over residues 226-236; that stretch reads QLKSSVGSLLQ. The span at 238–247 shows a compositional bias: basic and acidic residues; that stretch reads GDREMDREPL. The segment covering 249-270 has biased composition (low complexity); sequence RVPSRAPSPLPSRSRSSSVGES. Residues 274-337 form the SH3 domain; it reads GGGRSMRAIV…PAAYVASTED (64 aa). Residues 355 to 376 are compositionally biased toward polar residues; the sequence is LLEPTSQSESDTQTYSEVSSPV. A disordered region spans residues 355-516; that stretch reads LLEPTSQSES…TNDRSAPRIQ (162 aa). Over residues 434–450 the composition is skewed to basic and acidic residues; the sequence is PDRRAESHFESKVELKN. The segment covering 454–465 has biased composition (pro residues); it reads LPPPAPPLPNSP.

Its subcellular location is the cell membrane. Functionally, phosphoinositides-binding protein that induces the formation of planar or gently curved membrane structures. The sequence is that of BAR/IMD domain-containing adapter protein 2-like 2 (baiap2l2) from Danio rerio (Zebrafish).